A 337-amino-acid polypeptide reads, in one-letter code: Glyceraldehyde-3-phosphate dehydrogenase, cytosolic (337 aa).

Residues 1-151 (MAKVKVGING…YKSDLNIVSN (151 aa)) are binding to NAD. Residues 13-14 (RI), D35, and R82 each bind NAD(+). A catalytic region spans residues 152–337 (ASCTTNCLAP…DLIMHISKCQ (186 aa)). Residues 153 to 155 (SCT), T184, 213 to 214 (TG), and R236 contribute to the D-glyceraldehyde 3-phosphate site. The Nucleophile role is filled by C154. N318 lines the NAD(+) pocket.

The protein belongs to the glyceraldehyde-3-phosphate dehydrogenase family. As to quaternary structure, homotetramer.

Its subcellular location is the cytoplasm. It carries out the reaction D-glyceraldehyde 3-phosphate + phosphate + NAD(+) = (2R)-3-phospho-glyceroyl phosphate + NADH + H(+). Its pathway is carbohydrate degradation; glycolysis; pyruvate from D-glyceraldehyde 3-phosphate: step 1/5. In terms of biological role, key enzyme in glycolysis that catalyzes the first step of the pathway by converting D-glyceraldehyde 3-phosphate (G3P) into 3-phospho-D-glyceroyl phosphate. Essential for the maintenance of cellular ATP levels and carbohydrate metabolism. This is Glyceraldehyde-3-phosphate dehydrogenase, cytosolic (GAPC) from Mesembryanthemum crystallinum (Common ice plant).